A 118-amino-acid polypeptide reads, in one-letter code: Vesicle-associated membrane protein 1 (118 aa).

A compositionally biased stretch (low complexity) spans 1 to 15 (MSAPAQPPAEGTEGA). Residues 1–36 (MSAPAQPPAEGTEGAAPGGGPPGPPPNMTSNRRLQQ) form a disordered region. At 1-96 (MSAPAQPPAE…KRKYWWKNCK (96 aa)) the chain is on the cytoplasmic side. Residues 33-93 (RLQQTQAQVE…AKLKRKYWWK (61 aa)) form the v-SNARE coiled-coil homology domain. The residue at position 63 (serine 63) is a Phosphoserine. The helical; Anchor for type IV membrane protein transmembrane segment at 97 to 116 (MMIMLGAICAIIVVVIVIYF) threads the bilayer. At 117 to 118 (FT) the chain is on the vesicular side.

This sequence belongs to the synaptobrevin family. In terms of assembly, interacts with VAPA and VAPB. Post-translationally, (Microbial infection) Targeted and hydrolyzed by C.botulinum neurotoxin type X (BoNT/X) which hydrolyzes the 68-Arg-|-Ala-69 bond and probably inhibits neurotransmitter release. It remains unknown whether BoNT/X is ever produced, or what organisms it targets. Highly expressed in the zona incerta and rostral periolivary region of the brain. Other neuroanatomical regions show negligible expression. Expressed in the retina, expression observed in the outer segments of the photoreceptors, in the outer and inner plexiform layers, and in a subset of ganglion cells.

It localises to the cytoplasmic vesicle. Its subcellular location is the secretory vesicle. The protein resides in the synaptic vesicle membrane. The protein localises to the synapse. It is found in the synaptosome. It localises to the cytoplasmic vesicle membrane. Involved in the targeting and/or fusion of transport vesicles to their target membrane. The chain is Vesicle-associated membrane protein 1 (Vamp1) from Mus musculus (Mouse).